A 538-amino-acid polypeptide reads, in one-letter code: MTDLNKVVKELEALGIYDVKEVVYNPSYEQLFEEETKPGLEGFEKGTLTTTGAVAVDTGIFTGRSPKDKYIVLDEKTKDTVWWTSETAKNDNKPMNQATWQSLKDLVTNQLSRKRLFVVDGFCGASEHDRIAVRIVTEVAWQAHFVKNMFIRPTEEQLKNFEPDFVVMNGSKVTNPNWKEQGLNSENFVAFNLTERIQLIGGTWYGGEMKKGMFSMMNYFLPLKGVGAMHCSANVGKDGDVAIFFGLSGTGKTTLSTDPKRELIGDDEHGWDDVGIFNFEGGCYAKTIHLSEENEPDIYRAIRRDALLENVVVRSDGSVDFDDGSKTENTRVSYPIYHIDNIVKPVSRAGHATKVIFLTADAFGVLPPVSKLTPEQTKYYFLSGFTAKLAGTERGITEPTPTFSACFGAAFLTLHPTQYAEVLVKRMQAAGAEAYLVNTGWNGTGKRISIKDTRGIIDAILDGSIEKAEMGELPIFNLAIPKALPGVDSAILDPRDTYADKAQWQSKAEDLTGRFVKNFVKYATNEEGKALIAAGPKA.

The substrate site is built by Arg-64, Tyr-205, and Lys-211. Residues Lys-211, His-230, and 246–254 (GLSGTGKTT) contribute to the ATP site. Lys-211 and His-230 together coordinate Mn(2+). Asp-267 is a binding site for Mn(2+). Residues Glu-295, Arg-331, 447–448 (RI), and Thr-453 contribute to the ATP site. A substrate-binding site is contributed by Arg-331.

This sequence belongs to the phosphoenolpyruvate carboxykinase (ATP) family. Monomer. Requires Mn(2+) as cofactor.

It localises to the cytoplasm. It catalyses the reaction oxaloacetate + ATP = phosphoenolpyruvate + ADP + CO2. The protein operates within carbohydrate biosynthesis; gluconeogenesis. Functionally, involved in the gluconeogenesis. Catalyzes the conversion of oxaloacetate (OAA) to phosphoenolpyruvate (PEP) through direct phosphoryl transfer between the nucleoside triphosphate and OAA. The sequence is that of Phosphoenolpyruvate carboxykinase (ATP) from Haemophilus influenzae (strain PittGG).